A 354-amino-acid polypeptide reads, in one-letter code: Replication factor C subunit 3 (354 aa).

41–48 (GPSGSGKK) lines the ATP pocket.

It belongs to the activator 1 small subunits family. As to quaternary structure, heterotetramer of subunits RFC2, RFC3, RFC4 and RFC5 that can form a complex with RFC1.

The protein localises to the nucleus. In terms of biological role, may be involved in DNA replication and thus regulate cell proliferation. In Arabidopsis thaliana (Mouse-ear cress), this protein is Replication factor C subunit 3 (RFC3).